A 166-amino-acid polypeptide reads, in one-letter code: Ribosome maturation factor RimM (166 aa).

Residues 94 to 166 (EDEFYITDLN…AILNYKRDEL (73 aa)) enclose the PRC barrel domain.

It belongs to the RimM family. In terms of assembly, binds ribosomal protein uS19.

The protein localises to the cytoplasm. Its function is as follows. An accessory protein needed during the final step in the assembly of 30S ribosomal subunit, possibly for assembly of the head region. Essential for efficient processing of 16S rRNA. May be needed both before and after RbfA during the maturation of 16S rRNA. It has affinity for free ribosomal 30S subunits but not for 70S ribosomes. The polypeptide is Ribosome maturation factor RimM (Rickettsia bellii (strain RML369-C)).